We begin with the raw amino-acid sequence, 440 residues long: Thymidine phosphorylase (440 aa).

This sequence belongs to the thymidine/pyrimidine-nucleoside phosphorylase family. In terms of assembly, homodimer.

It carries out the reaction thymidine + phosphate = 2-deoxy-alpha-D-ribose 1-phosphate + thymine. The protein operates within pyrimidine metabolism; dTMP biosynthesis via salvage pathway; dTMP from thymine: step 1/2. Its function is as follows. The enzymes which catalyze the reversible phosphorolysis of pyrimidine nucleosides are involved in the degradation of these compounds and in their utilization as carbon and energy sources, or in the rescue of pyrimidine bases for nucleotide synthesis. The polypeptide is Thymidine phosphorylase (Escherichia coli (strain K12 / DH10B)).